The chain runs to 535 residues: MTDQTTRLPIRRALISVSDKTGVVDFARELVALGVEILSTGGTYKLLRDNGIAAVEVADYTGFPEMMDGRVKTLHPKVHGGILGRRDLDGAVMEQHGIKPIDLVAVNLYPFEATVARPDCDLPSAIENIDIGGPTMVRSAAKNHKDVAIVVNAGDYAAVVEALKAGGLTYAQRFDLALKAFEHTSAYDGMIANYLGTIDQTRDTLGTADRGAFPRTFNSQFVKAQEMRYGENPHQSAAFYVEAKKGEASVSTAIQLQGKELSFNNVADTDAALECVKSFLKPACVIVKHANPCGVAVVPEDEGGIRKAYDLAYATDSESAFGGIIAFNRELDGETARAIVERQFVEVIIAPKISAAAREVVAAKANVRLLECGEWPAERAPGWDFKRVNGGLLVQSRDIGMIKAEDLKIVTRRAPTEQEIHDLIFAWKVAKFVKSNAIVYARNRQTVGVGAGQMSRVNSARIAAIKAEHAGLEVKGAVMASDAFFPFRDGIDNAAKAGITAVIQPGGSMRDNEVIAAADEADIAMVFTGMRHFRH.

The MGS-like domain occupies 6–151 (TRLPIRRALI…KNHKDVAIVV (146 aa)).

The protein belongs to the PurH family.

It catalyses the reaction (6R)-10-formyltetrahydrofolate + 5-amino-1-(5-phospho-beta-D-ribosyl)imidazole-4-carboxamide = 5-formamido-1-(5-phospho-D-ribosyl)imidazole-4-carboxamide + (6S)-5,6,7,8-tetrahydrofolate. It carries out the reaction IMP + H2O = 5-formamido-1-(5-phospho-D-ribosyl)imidazole-4-carboxamide. Its pathway is purine metabolism; IMP biosynthesis via de novo pathway; 5-formamido-1-(5-phospho-D-ribosyl)imidazole-4-carboxamide from 5-amino-1-(5-phospho-D-ribosyl)imidazole-4-carboxamide (10-formyl THF route): step 1/1. It functions in the pathway purine metabolism; IMP biosynthesis via de novo pathway; IMP from 5-formamido-1-(5-phospho-D-ribosyl)imidazole-4-carboxamide: step 1/1. The chain is Bifunctional purine biosynthesis protein PurH from Pseudomonas paraeruginosa (strain DSM 24068 / PA7) (Pseudomonas aeruginosa (strain PA7)).